The primary structure comprises 268 residues: Hemolysin C (268 aa).

2 consecutive CBS domains span residues 52–111 (MVPR…NFSL) and 114–171 (ILHK…IRDE).

The protein belongs to the UPF0053 family.

In terms of biological role, bacterial hemolysins are exotoxins that attack blood cell membranes and cause cell rupture by mechanisms not clearly defined. This is Hemolysin C (tlyC) from Brachyspira hyodysenteriae (Treponema hyodysenteriae).